A 552-amino-acid polypeptide reads, in one-letter code: Probable protein kinase UbiB (552 aa).

The Protein kinase domain occupies H121–A504. Residues L127 to V135 and K149 each bind ATP. D284 (proton acceptor) is an active-site residue. 2 helical membrane passes run V501 to H521 and I530 to W550.

It belongs to the ABC1 family. UbiB subfamily.

It is found in the cell inner membrane. It participates in cofactor biosynthesis; ubiquinone biosynthesis [regulation]. Is probably a protein kinase regulator of UbiI activity which is involved in aerobic coenzyme Q (ubiquinone) biosynthesis. This Xylella fastidiosa (strain M12) protein is Probable protein kinase UbiB.